A 549-amino-acid polypeptide reads, in one-letter code: MAAKDIRFGEDARSRMVRGVNVLANAVKATLGPKGRNVVLEKSFGAPTITKDGVSVAKEIELADKFENMGAQMVKEVASRTNDDAGDGTTTATVLAQALIREGAKAVAAGMNPMDLKRGIDKAVSAAVAELKNISKPTADDKAIAQVGTISANSDESIGQIIADAMKEVGKEGVITVEEGSGLDNELDVVKGMQFDRGYLSPYFINNQQSQTADLDDPFILLHDKKISNVRDLLPVLEGVAKAGKPLLIVAEEVEGEALATLVVNTIRGIVKVVAVKAPGFGDRRKAMLEDMAVLTGGTVISEEVGLSLEKATIKDLGRAKKVQVSKENTTIIDGVGDKANVDARVAQIKTQIQDTSSDYDREKLQERVAKLAGGVAVIKVGASTEIEMKEKKDRVDDALHATRAAVEEGVVPGGGVALVRAITALAGLKGANEDQNHGIQIALRAMEAPLREIVANAGDEPSVIINKVKEGTGSFGYNAATGEFGDMLQFGILDPTKVTRSALQNAASIAGLMITTEAMVAEAPKKDEPAMGGAGGMGGMGGMGGMDF.

ATP is bound by residues 30–33, Lys-51, 87–91, Gly-415, 479–481, and Asp-495; these read TLGP, DGTTT, and NAA.

This sequence belongs to the chaperonin (HSP60) family. Forms a cylinder of 14 subunits composed of two heptameric rings stacked back-to-back. Interacts with the co-chaperonin GroES.

It localises to the cytoplasm. The catalysed reaction is ATP + H2O + a folded polypeptide = ADP + phosphate + an unfolded polypeptide.. In terms of biological role, together with its co-chaperonin GroES, plays an essential role in assisting protein folding. The GroEL-GroES system forms a nano-cage that allows encapsulation of the non-native substrate proteins and provides a physical environment optimized to promote and accelerate protein folding. This Stenotrophomonas maltophilia (strain K279a) protein is Chaperonin GroEL.